A 546-amino-acid chain; its full sequence is Sterol O-acyltransferase 1 (546 aa).

Residue methionine 1 is modified to N-acetylmethionine. The disordered stretch occupies residues 1–37; sequence MVGEEKMSLRNRLSKSGENPEQDEAQRSVSDTQSNGR. The Cytoplasmic portion of the chain corresponds to 1–134; the sequence is MVGEEKMSLR…LDELFEVDHI (134 aa). Residue serine 8 is modified to Phosphoserine. Over residues 27–37 the composition is skewed to polar residues; that stretch reads RSVSDTQSNGR. Histidine 133 provides a ligand contact to cholesterol. Residues 135–156 form a helical membrane-spanning segment; it reads RTIYHMFIGLLILFILSTLVVD. Residues 157 to 176 are Lumenal-facing; it reads YIDEGRLVLEFNLLGYAFGK. Residues 177–202 form a helical membrane-spanning segment; sequence LPTVIWTWWAMFLSTLSIPYFLFQRW. The Cytoplasmic segment spans residues 203-214; sequence AHGYSKTSHPLI. A helical membrane pass occupies residues 215–240; the sequence is YSLSHGFFFLVFQLGILGFVPTYVVL. At 241 to 248 the chain is on the lumenal side; the sequence is AYTLPPAS. A helical transmembrane segment spans residues 249 to 272; that stretch reads RFIVILEQIRMVMKAHSFVRENVP. The Cytoplasmic segment spans residues 273-315; it reads RVLNAAKEKSSTVPVPTVNQYLYFLFAPTLIYRDSYPRTPTVR. The chain crosses the membrane as a helical span at residues 316–348; that stretch reads WGYVAVQFLQVFGCLFYVYYIFERLCAPLFRNI. Topologically, residues 349–365 are lumenal; it reads KQEPFSARVLVLCVFNS. A helical transmembrane segment spans residues 366–391; sequence ILPGVLMLFLTFFAFLHCWLNAFAEM. Residues 392-439 lie on the Cytoplasmic side of the membrane; it reads LRFGDRMFYKDWWNSTSYSNYYRTWNVVVHDWLYYYAYKDLLWFFSKR. The FYXDWWN motif signature appears at 399 to 405; it reads FYKDWWN. Residues asparagine 411, arginine 414, asparagine 417, histidine 421, tyrosine 429, lysine 441, and serine 452 each contribute to the an acyl-CoA site. A helical transmembrane segment spans residues 440-464; it reads FKSAAMLAVFALSAVVHEYALAVCL. Histidine 456 is a catalytic residue. Topologically, residues 465-470 are lumenal; it reads SYFYPV. Residues 471–486 traverse the membrane as a helical segment; the sequence is LFVLFMFFGMAFNFIV. The Cytoplasmic portion of the chain corresponds to 487–492; that stretch reads NDSRKR. Residues 493-524 traverse the membrane as a helical segment; that stretch reads PIWNIMVWASLFLGHGVILCFYSQEWYARQHC. Cysteine 524 and cysteine 542 are disulfide-bonded. At 525–546 the chain is on the lumenal side; the sequence is PLKNPTFLDYVRPRSWTCQYVF.

This sequence belongs to the membrane-bound acyltransferase family. Sterol o-acyltransferase subfamily. In terms of assembly, may form homo- or heterodimers. Interacts with UBIAD1.

It is found in the endoplasmic reticulum membrane. The catalysed reaction is a sterol + a long-chain fatty acyl-CoA = a long-chain 3-hydroxysterol ester + CoA. It carries out the reaction cholesterol + an acyl-CoA = a cholesterol ester + CoA. It catalyses the reaction cholesterol + (9Z)-octadecenoyl-CoA = cholesteryl (9Z-octadecenoate) + CoA. The enzyme catalyses cholesterol + hexadecanoyl-CoA = cholesteryl hexadecanoate + CoA. The catalysed reaction is octadecanoyl-CoA + cholesterol = cholesteryl octadecanoate + CoA. It carries out the reaction (9Z,12Z)-octadecadienoyl-CoA + cholesterol = cholesteryl (9Z,12Z)-octadecadienoate + CoA. It catalyses the reaction (5Z,8Z,11Z,14Z)-eicosatetraenoyl-CoA + cholesterol = cholesteryl (5Z,8Z,11Z,14Z)-eicosatetraenoate + CoA. The enzyme catalyses (9Z)-hexadecenoyl-CoA + cholesterol = cholesteryl (9Z)-hexadecenoate + CoA. The catalysed reaction is (11Z)-octadecenoyl-CoA + cholesterol = cholesteryl (11Z)-octadecenoate + CoA. It carries out the reaction (7Z)-octadecenoyl-CoA + cholesterol = cholesteryl (7Z)-octadecenoate + CoA. Catalyzes the formation of fatty acid-cholesterol esters, which are less soluble in membranes than cholesterol. Plays a role in lipoprotein assembly and dietary cholesterol absorption. Preferentially utilizes oleoyl-CoA ((9Z)-octadecenoyl-CoA) as a substrate: shows a higher activity towards an acyl-CoA substrate with a double bond at the delta-9 position (9Z) than towards saturated acyl-CoA or an unsaturated acyl-CoA with a double bond at the delta-7 (7Z) or delta-11 (11Z) positions. This chain is Sterol O-acyltransferase 1 (SOAT1), found in Cricetulus griseus (Chinese hamster).